The sequence spans 149 residues: Ribosome maturation factor RimP (149 aa).

It belongs to the RimP family.

The protein resides in the cytoplasm. Required for maturation of 30S ribosomal subunits. The chain is Ribosome maturation factor RimP from Neisseria meningitidis serogroup A / serotype 4A (strain DSM 15465 / Z2491).